The primary structure comprises 67 residues: Kappa-scoloptoxin(04)-Ssd1b (67 aa).

Positions 1 to 24 (MKKTCVVSVFLVLLLLKFHDLSMG) are cleaved as a signal peptide. A propeptide spanning residues 25–36 (EEISPLKKVARR) is cleaved from the precursor. Intrachain disulfides connect Cys44/Cys55 and Cys49/Cys62.

As to expression, expressed by the venom gland.

It is found in the secreted. The chain is Kappa-scoloptoxin(04)-Ssd1b from Scolopendra dehaani (Thai centipede).